Consider the following 447-residue polypeptide: Phosphoglucosamine mutase (447 aa).

Catalysis depends on Ser102, which acts as the Phosphoserine intermediate. Ser102, Asp241, Asp243, and Asp245 together coordinate Mg(2+). Ser102 is modified (phosphoserine).

This sequence belongs to the phosphohexose mutase family. The cofactor is Mg(2+). In terms of processing, activated by phosphorylation.

The catalysed reaction is alpha-D-glucosamine 1-phosphate = D-glucosamine 6-phosphate. Functionally, catalyzes the conversion of glucosamine-6-phosphate to glucosamine-1-phosphate. The protein is Phosphoglucosamine mutase of Hamiltonella defensa subsp. Acyrthosiphon pisum (strain 5AT).